Here is an 874-residue protein sequence, read N- to C-terminus: Bifunctional uridylyltransferase/uridylyl-removing enzyme (874 aa).

Residues 1-332 are uridylyltransferase; sequence MTLQSPLTFR…NGGASEDAEI (332 aa). The tract at residues 333 to 692 is uridylyl-removing; sequence IDEDFQRRGA…ISKKATRGGT (360 aa). Positions 451–573 constitute an HD domain; it reads VDEHSIRLLK…VRDEEYLEYL (123 aa). ACT domains are found at residues 693–777 and 800–874; these read EVFV…RTPN and LMEF…SVSA.

The protein belongs to the GlnD family. Requires Mg(2+) as cofactor.

The catalysed reaction is [protein-PII]-L-tyrosine + UTP = [protein-PII]-uridylyl-L-tyrosine + diphosphate. The enzyme catalyses [protein-PII]-uridylyl-L-tyrosine + H2O = [protein-PII]-L-tyrosine + UMP + H(+). With respect to regulation, uridylyltransferase (UTase) activity is inhibited by glutamine, while glutamine activates uridylyl-removing (UR) activity. In terms of biological role, modifies, by uridylylation and deuridylylation, the PII regulatory proteins (GlnB and homologs), in response to the nitrogen status of the cell that GlnD senses through the glutamine level. Under low glutamine levels, catalyzes the conversion of the PII proteins and UTP to PII-UMP and PPi, while under higher glutamine levels, GlnD hydrolyzes PII-UMP to PII and UMP (deuridylylation). Thus, controls uridylylation state and activity of the PII proteins, and plays an important role in the regulation of nitrogen assimilation and metabolism. This is Bifunctional uridylyltransferase/uridylyl-removing enzyme from Vibrio campbellii (strain ATCC BAA-1116).